Here is an 82-residue protein sequence, read N- to C-terminus: UPF0180 protein BC_1394 (82 aa).

This sequence belongs to the UPF0180 family.

This Bacillus cereus (strain ATCC 14579 / DSM 31 / CCUG 7414 / JCM 2152 / NBRC 15305 / NCIMB 9373 / NCTC 2599 / NRRL B-3711) protein is UPF0180 protein BC_1394.